A 454-amino-acid polypeptide reads, in one-letter code: NADP-specific glutamate dehydrogenase 1 (454 aa).

Lysine 110 is a catalytic residue. 174–203 provides a ligand contact to NAD(+); the sequence is GVLTGKGLNWGGSLIRPEATGYGLVYYTQA.

Belongs to the Glu/Leu/Phe/Val dehydrogenases family. In terms of assembly, homohexamer.

It catalyses the reaction L-glutamate + NADP(+) + H2O = 2-oxoglutarate + NH4(+) + NADPH + H(+). This Saccharomyces uvarum (strain ATCC 76518 / CBS 7001 / CLIB 283 / NBRC 10550 / MCYC 623 / NCYC 2669 / NRRL Y-11845) (Yeast) protein is NADP-specific glutamate dehydrogenase 1 (GDH1).